The following is a 349-amino-acid chain: Phosphoribosylformylglycinamidine cyclo-ligase (349 aa).

The protein belongs to the AIR synthase family.

Its subcellular location is the cytoplasm. The catalysed reaction is 2-formamido-N(1)-(5-O-phospho-beta-D-ribosyl)acetamidine + ATP = 5-amino-1-(5-phospho-beta-D-ribosyl)imidazole + ADP + phosphate + H(+). It functions in the pathway purine metabolism; IMP biosynthesis via de novo pathway; 5-amino-1-(5-phospho-D-ribosyl)imidazole from N(2)-formyl-N(1)-(5-phospho-D-ribosyl)glycinamide: step 2/2. The polypeptide is Phosphoribosylformylglycinamidine cyclo-ligase (Albidiferax ferrireducens (strain ATCC BAA-621 / DSM 15236 / T118) (Rhodoferax ferrireducens)).